The sequence spans 427 residues: Glutamate-1-semialdehyde 2,1-aminomutase (427 aa).

Lys-265 carries the post-translational modification N6-(pyridoxal phosphate)lysine.

It belongs to the class-III pyridoxal-phosphate-dependent aminotransferase family. HemL subfamily. As to quaternary structure, homodimer. Pyridoxal 5'-phosphate is required as a cofactor.

It is found in the cytoplasm. It catalyses the reaction (S)-4-amino-5-oxopentanoate = 5-aminolevulinate. The protein operates within porphyrin-containing compound metabolism; protoporphyrin-IX biosynthesis; 5-aminolevulinate from L-glutamyl-tRNA(Glu): step 2/2. This is Glutamate-1-semialdehyde 2,1-aminomutase from Pseudomonas entomophila (strain L48).